The sequence spans 135 residues: Large ribosomal subunit protein bL19 (135 aa).

The protein belongs to the bacterial ribosomal protein bL19 family.

Functionally, this protein is located at the 30S-50S ribosomal subunit interface and may play a role in the structure and function of the aminoacyl-tRNA binding site. This chain is Large ribosomal subunit protein bL19, found in Xanthomonas campestris pv. campestris (strain 8004).